Here is a 730-residue protein sequence, read N- to C-terminus: Cyclin-dependent kinase 12 (730 aa).

2 disordered regions span residues 1-230 and 246-283; these read MEIS…APFS and FSLS…IATR. The segment covering 9 to 21 has biased composition (basic and acidic residues); the sequence is THERDRKGSYGHR. Positions 57-67 are enriched in polar residues; that stretch reads SISPQYKQRNW. Over residues 75 to 94 the composition is skewed to basic and acidic residues; it reads GRDRGRNDFSYRKKGKDYNK. Basic residues-rich tracts occupy residues 95-122 and 151-163; these read RRDK…KRRN and KSKK…RKHS. The segment covering 194–203 has biased composition (low complexity); the sequence is FNINPFQPMF. Residues 204 to 230 are compositionally biased toward pro residues; that stretch reads SQPPPPPLPPNSQFMTPPPRPPPAPFS. Residues 313–605 form the Protein kinase domain; sequence MLDQIGEGTY…AKEALNHPWI (293 aa). ATP-binding positions include 317–325, K340, and 398–403; these read IGEGTYGQV and EYVDHD. Residue D444 is the Proton acceptor of the active site. The interval 623–730 is disordered; the sequence is DCHEMWSKKQ…QSQYQSVFFK (108 aa). H625 is a binding site for ATP. Positions 676-688 are enriched in basic residues; it reads NHHHHHHHSHHHA. Over residues 714–730 the composition is skewed to polar residues; sequence NNHQPVPQSQYQSVFFK.

It belongs to the protein kinase superfamily. CMGC Ser/Thr protein kinase family. CDC2/CDKX subfamily.

The protein resides in the nucleus. The enzyme catalyses [DNA-directed RNA polymerase] + ATP = phospho-[DNA-directed RNA polymerase] + ADP + H(+). The catalysed reaction is L-seryl-[protein] + ATP = O-phospho-L-seryl-[protein] + ADP + H(+). It carries out the reaction L-threonyl-[protein] + ATP = O-phospho-L-threonyl-[protein] + ADP + H(+). Cyclin-dependent kinase which displays CTD kinase activity: hyperphosphorylates 'Ser-2' in the C-terminal heptapeptide repeat domain (CTD) of the largest RNA polymerase II subunit, thereby acting as a key regulator of transcription elongation. Required for normal reproduction. The polypeptide is Cyclin-dependent kinase 12 (Caenorhabditis elegans).